A 172-amino-acid chain; its full sequence is Cytidylate kinase (172 aa).

Gly-8–Thr-16 contacts ATP.

The protein belongs to the cytidylate kinase family. Type 2 subfamily.

It localises to the cytoplasm. It catalyses the reaction CMP + ATP = CDP + ADP. It carries out the reaction dCMP + ATP = dCDP + ADP. This Ignicoccus hospitalis (strain KIN4/I / DSM 18386 / JCM 14125) protein is Cytidylate kinase.